A 443-amino-acid chain; its full sequence is 5-methylthioadenosine/S-adenosylhomocysteine deaminase (443 aa).

Residues His74 and His76 each coordinate Zn(2+). Residues Glu103 and His196 each contribute to the substrate site. A Zn(2+)-binding site is contributed by His223. The substrate site is built by Glu226 and Asp311. Asp311 provides a ligand contact to Zn(2+).

The protein belongs to the metallo-dependent hydrolases superfamily. MTA/SAH deaminase family. Zn(2+) serves as cofactor.

The enzyme catalyses S-adenosyl-L-homocysteine + H2O + H(+) = S-inosyl-L-homocysteine + NH4(+). The catalysed reaction is S-methyl-5'-thioadenosine + H2O + H(+) = S-methyl-5'-thioinosine + NH4(+). In terms of biological role, catalyzes the deamination of 5-methylthioadenosine and S-adenosyl-L-homocysteine into 5-methylthioinosine and S-inosyl-L-homocysteine, respectively. Is also able to deaminate adenosine. This Haloquadratum walsbyi (strain DSM 16790 / HBSQ001) protein is 5-methylthioadenosine/S-adenosylhomocysteine deaminase.